We begin with the raw amino-acid sequence, 250 residues long: 1-(5-phosphoribosyl)-5-[(5-phosphoribosylamino)methylideneamino] imidazole-4-carboxamide isomerase (250 aa).

The Proton acceptor role is filled by D12. D134 serves as the catalytic Proton donor.

Belongs to the HisA/HisF family.

The protein resides in the cytoplasm. The catalysed reaction is 1-(5-phospho-beta-D-ribosyl)-5-[(5-phospho-beta-D-ribosylamino)methylideneamino]imidazole-4-carboxamide = 5-[(5-phospho-1-deoxy-D-ribulos-1-ylimino)methylamino]-1-(5-phospho-beta-D-ribosyl)imidazole-4-carboxamide. It participates in amino-acid biosynthesis; L-histidine biosynthesis; L-histidine from 5-phospho-alpha-D-ribose 1-diphosphate: step 4/9. The chain is 1-(5-phosphoribosyl)-5-[(5-phosphoribosylamino)methylideneamino] imidazole-4-carboxamide isomerase from Actinobacillus pleuropneumoniae serotype 3 (strain JL03).